The following is a 225-amino-acid chain: MGFGDLKSPAGLQVLNDYLADKSYIEGYVPSQADVAVFEAVSGPPPADLCHALRWYNHIKSYEKEKASLPGVKKALGKYGPANVEDTTESGATDSKDDDDIDLFGSDDEEESEEAKRLREERLAQYESKKAKKPALVAKSSILLDVKPWDDETDMAKLEECVRSIQADGLVWGSSKLVPVGYGIKKLQIQCVVEDDKVGTDMLEEQITAFDEYVQSMDVAAFNKI.

A GST C-terminal domain is found at 2-90; sequence GFGDLKSPAG…PANVEDTTES (89 aa). K7 is modified (N6-acetyllysine). Phosphoserine occurs at positions 8 and 42. A disordered region spans residues 78–115; the sequence is KYGPANVEDTTESGATDSKDDDDIDLFGSDDEEESEEA. A phosphothreonine mark is found at T88 and T93. Position 95 is a phosphoserine (S95). The segment covering 96-113 has biased composition (acidic residues); the sequence is KDDDDIDLFGSDDEEESE. S106 carries the phosphoserine; by CK2 modification. Residue K147 forms a Glycyl lysine isopeptide (Lys-Gly) (interchain with G-Cter in SUMO2) linkage. Phosphoserine is present on S174.

Belongs to the EF-1-beta/EF-1-delta family. EF-1 is composed of 4 subunits: alpha, beta (alpha subunit of the eEF1B subcomplex), delta (beta subunit of the eEF1B subcomplex), and gamma (gamma subunit of the eEF1B subcomplex). Interacts with elongation factor EEF1A1. Phosphorylation affects the GDP/GTP exchange rate.

Its function is as follows. Catalytic subunit of the guanine nucleotide exchange factor (GEF) (eEF1B subcomplex) of the eukaryotic elongation factor 1 complex (eEF1). Stimulates the exchange of GDP for GTP on elongation factor 1A (eEF1A), probably by displacing GDP from the nucleotide binding pocket in eEF1A. The protein is Elongation factor 1-beta (EEF1B) of Bos taurus (Bovine).